Consider the following 904-residue polypeptide: MSQQTTIRKLAELVNTPVDKLLVQLAEAGMKFSGPDQVVTSTEKMKLLGFLRRTHGKAETSAEAASEAAKKITLNRRKLQEVTVNAGRTKTTVNVEVRQKRTYVKSENEGGGRAAPMTPDEERADILRKLEESRQRNLEEQQRLAESDRVRDEAIQRKREEEQAAKDRAEAERKAAEEAAAAASAPAPVADAPKPSAAAPAARLPSSPSSAPRAARPAGASPASRPAAPARADDRSNAAKHKTRGSHVMVAGVEDDDATKRFAGQLHLSAADRARRSNVRGKPTGRPGSSSSRRGNDSGRGGSQANSGPHGFERPTAPVVREVAIGETITVADLAQKLALKGGDVVKALFKMGVMATITQSIDHDTAALVTEELGHKAVRADNADFEDALLAHAEDAQGEATSRPPVVTIMGHVDHGKTSLLDYIRRTKIASGEAGGITQHIGAYHVETGRGVISFLDTPGHAAFTSMRARGAKITDIVVLVVAADDGVMPQTKEAVAHAKAAGVPLIVAVNKIDKTGADPLRVKNELLAENVVAEEFGGDTQFIEVSAKLGTGVDTLLDAISLQAEVLELKAVAEGRASGTVIESSLDKGRGPVATVLVQQGALKRGDYLVCGIQYGRVRALFDETGHQPASAGPSIPVQVLGLSGVPEAGDDFVVVDDERLAKDVAQQRETKRRESRLVASATNRMEDILAQMGKGEGQQVLNLVIKADVQGSVEALKQSLVALSNEDIRINVIHSGVGGITESDANSAAASKATIIGFNVRADASARKIVESNGIDLRYFSIIYDVIDQVKQVASGLLGVEIREEIIGIAQVRDVFRSSKFGAVAGCMVIEGVVKRSKPIRVLRDSVVVFEGELESLRRFKENVDEVRNGTECGIGVKAYNDVKAGDQIECFERIEVARTL.

Disordered stretches follow at residues 102-122, 134-252, and 267-316; these read TYVK…PDEE, RQRN…MVAG, and HLSA…ERPT. The segment covering 134-177 has biased composition (basic and acidic residues); the sequence is RQRNLEEQQRLAESDRVRDEAIQRKREEEQAAKDRAEAERKAAE. Residues 178 to 230 are compositionally biased toward low complexity; the sequence is EAAAAASAPAPVADAPKPSAAAPAARLPSSPSSAPRAARPAGASPASRPAAPA. The tr-type G domain maps to 403–572; that stretch reads SRPPVVTIMG…SLQAEVLELK (170 aa). Residues 412–419 form a G1 region; it reads GHVDHGKT. 412 to 419 contributes to the GTP binding site; that stretch reads GHVDHGKT. A G2 region spans residues 437-441; that stretch reads GITQH. The segment at 458 to 461 is G3; it reads DTPG. GTP contacts are provided by residues 458–462 and 512–515; these read DTPGH and NKID. Residues 512 to 515 are G4; it reads NKID. A G5 region spans residues 548–550; it reads SAK.

It belongs to the TRAFAC class translation factor GTPase superfamily. Classic translation factor GTPase family. IF-2 subfamily.

It is found in the cytoplasm. In terms of biological role, one of the essential components for the initiation of protein synthesis. Protects formylmethionyl-tRNA from spontaneous hydrolysis and promotes its binding to the 30S ribosomal subunits. Also involved in the hydrolysis of GTP during the formation of the 70S ribosomal complex. This is Translation initiation factor IF-2 from Xanthomonas axonopodis pv. citri (strain 306).